A 290-amino-acid polypeptide reads, in one-letter code: UDP-N-acetylenolpyruvoylglucosamine reductase (290 aa).

The 168-residue stretch at 20–187 folds into the FAD-binding PCMH-type domain; it reads GVGGESEMWF…SRVRLKLRPS (168 aa). The active site involves Arg-167.

This sequence belongs to the MurB family. FAD serves as cofactor.

The protein resides in the cytoplasm. It catalyses the reaction UDP-N-acetyl-alpha-D-muramate + NADP(+) = UDP-N-acetyl-3-O-(1-carboxyvinyl)-alpha-D-glucosamine + NADPH + H(+). It functions in the pathway cell wall biogenesis; peptidoglycan biosynthesis. Its function is as follows. Cell wall formation. This chain is UDP-N-acetylenolpyruvoylglucosamine reductase, found in Deinococcus radiodurans (strain ATCC 13939 / DSM 20539 / JCM 16871 / CCUG 27074 / LMG 4051 / NBRC 15346 / NCIMB 9279 / VKM B-1422 / R1).